The following is a 308-amino-acid chain: D-alanine--D-alanine ligase (308 aa).

Residues 102–302 (KHVAKAAGIP…FGEFLRWMVE (201 aa)) enclose the ATP-grasp domain. 128 to 183 (PMKPPYVVKPVREGSSFGVVIVKEDQSHPPQVITSSDWRYGDRIMVERYVAGREFT) provides a ligand contact to ATP. Positions 252, 269, and 271 each coordinate Mg(2+).

The protein belongs to the D-alanine--D-alanine ligase family. Mg(2+) serves as cofactor. The cofactor is Mn(2+).

The protein resides in the cytoplasm. It catalyses the reaction 2 D-alanine + ATP = D-alanyl-D-alanine + ADP + phosphate + H(+). The protein operates within cell wall biogenesis; peptidoglycan biosynthesis. In terms of biological role, cell wall formation. The sequence is that of D-alanine--D-alanine ligase from Sinorhizobium medicae (strain WSM419) (Ensifer medicae).